The primary structure comprises 393 residues: Cytochrome b (393 aa).

A run of 4 helical transmembrane segments spans residues 38 to 58, 82 to 104, 119 to 139, and 185 to 205; these read FGSLAGICLVIQIVTGVFLAM, WLLRYMHANGASMFFIVVYLHIF, VWCLGVVIFLLMIVTAFIGYV, and FFSLHYLLPFILVGASLLHLA. Heme b is bound by residues H88 and H102. Residues H189 and H203 each coordinate heme b. H208 contacts a ubiquinone. The next 4 helical transmembrane spans lie at 231–251, 295–315, 327–347, and 354–373; these read FYVKDLVGWVAFAIFFSIWIF, VGGVAAIALVFICLLALPFFK, IYQGIFWLLLADCLLLGWIGC, and FVTIGQISSLVFFLFFAITP.

Belongs to the cytochrome b family. In terms of assembly, the main subunits of complex b-c1 are: cytochrome b, cytochrome c1 and the Rieske protein. Heme b is required as a cofactor. In terms of processing, first mitochondrial-encoded protein to be shown to have its N-terminal methionine cleaved off.

The protein localises to the mitochondrion inner membrane. Its function is as follows. Component of the ubiquinol-cytochrome c reductase complex (complex III or cytochrome b-c1 complex) that is part of the mitochondrial respiratory chain. The b-c1 complex mediates electron transfer from ubiquinol to cytochrome c. Contributes to the generation of a proton gradient across the mitochondrial membrane that is then used for ATP synthesis. The protein is Cytochrome b (MT-CYB) of Solanum tuberosum (Potato).